The primary structure comprises 309 residues: Taste receptor type 2 member 43 (309 aa).

A topological domain (extracellular) is located at residue M1. The helical transmembrane segment at 2–22 (ITFLPIIFSSLVVVTFVIGNF) threads the bilayer. At 23–46 (ANGFIALVNSIEWFKRQKISFADQ) the chain is on the cytoplasmic side. A helical transmembrane segment spans residues 47–67 (ILTALAVSRVGLLWVLLLNWY). Residues 68 to 86 (STVLNPAFNSVEVRTTAYN) lie on the Extracellular side of the membrane. A helical membrane pass occupies residues 87–107 (IWAVINHFSNWLATSLSIFYL). The Cytoplasmic segment spans residues 108-126 (LKIANFSNFIFLHLKRRVK). Residues 127-147 (SVILVMLLGPLLFLACHLFVI) form a helical membrane-spanning segment. Over 148–178 (NMNEIVRTKEFEGNMTWKIKLKSAMYFSNMT) the chain is Extracellular. N-linked (GlcNAc...) asparagine glycans are attached at residues N161 and N176. The chain crosses the membrane as a helical span at residues 179–199 (VTMVANLVPFTLTLLSFLLLI). Topologically, residues 200–229 (CSLCKHLKKMQLHGKGSQDPSTKVHIKVLQ) are cytoplasmic. The helical transmembrane segment at 230–250 (TVISFLLLCAIYFLSIMISVW) threads the bilayer. The Extracellular portion of the chain corresponds to 251–259 (SFGSLKNKP). A helical membrane pass occupies residues 260–280 (VFMFCKAMRFSYPSIHPFILI). The Cytoplasmic segment spans residues 281-309 (WGNKKLKQTFLSVFWQMRYWVKGEKTSSP).

This sequence belongs to the G-protein coupled receptor T2R family.

The protein resides in the membrane. It localises to the cell projection. Its subcellular location is the cilium membrane. Gustducin-coupled receptor immplicated in the perception of bitter compounds in the oral cavity and the gastrointestinal tract. Signals through PLCB2 and the calcium-regulated cation channel TRPM5. Activated by the sulfonyl amide sweeteners saccharin and acesulfame K. In airway epithelial cells, binding of bitter compounds increases the intracellular calcium ion concentration and stimulates ciliary beat frequency. May act as chemosensory receptors in airway epithelial cells to detect and eliminate potential noxious agents from the airways. The protein is Taste receptor type 2 member 43 (TAS2R43) of Pan troglodytes (Chimpanzee).